Here is a 156-residue protein sequence, read N- to C-terminus: Small ribosomal subunit protein uS7c (156 aa).

This sequence belongs to the universal ribosomal protein uS7 family. As to quaternary structure, part of the 30S ribosomal subunit.

The protein localises to the plastid. It is found in the chloroplast. One of the primary rRNA binding proteins, it binds directly to 16S rRNA where it nucleates assembly of the head domain of the 30S subunit. This is Small ribosomal subunit protein uS7c (rps7) from Chlorokybus atmophyticus (Soil alga).